The sequence spans 338 residues: Glycerol-3-phosphate dehydrogenase [NAD(P)+] (338 aa).

NADPH-binding residues include S14, Y15, H35, and K109. Positions 109, 138, and 140 each coordinate sn-glycerol 3-phosphate. Residue A142 coordinates NADPH. Residues K194, D247, S257, R258, and N259 each contribute to the sn-glycerol 3-phosphate site. K194 functions as the Proton acceptor in the catalytic mechanism. R258 provides a ligand contact to NADPH. V282 and E284 together coordinate NADPH.

It belongs to the NAD-dependent glycerol-3-phosphate dehydrogenase family.

Its subcellular location is the cytoplasm. The catalysed reaction is sn-glycerol 3-phosphate + NAD(+) = dihydroxyacetone phosphate + NADH + H(+). It carries out the reaction sn-glycerol 3-phosphate + NADP(+) = dihydroxyacetone phosphate + NADPH + H(+). Its pathway is membrane lipid metabolism; glycerophospholipid metabolism. In terms of biological role, catalyzes the reduction of the glycolytic intermediate dihydroxyacetone phosphate (DHAP) to sn-glycerol 3-phosphate (G3P), the key precursor for phospholipid synthesis. In Shewanella oneidensis (strain ATCC 700550 / JCM 31522 / CIP 106686 / LMG 19005 / NCIMB 14063 / MR-1), this protein is Glycerol-3-phosphate dehydrogenase [NAD(P)+].